The sequence spans 322 residues: Protein-L-isoaspartate O-methyltransferase (322 aa).

Residues 1–101 are disordered; sequence MSGERAKRFP…AKQGDRSAAP (101 aa). The span at 14 to 29 shows a compositional bias: basic and acidic residues; that stretch reads EDLKREPRKPEGRVAE. 2 stretches are compositionally biased toward low complexity: residues 33–51 and 76–91; these read AGDAARQRLTAAAAVPAAA and HAPAAPGAAKRAPQGG. Serine 170 is an active-site residue.

Belongs to the methyltransferase superfamily. L-isoaspartyl/D-aspartyl protein methyltransferase family.

The protein localises to the cytoplasm. The enzyme catalyses [protein]-L-isoaspartate + S-adenosyl-L-methionine = [protein]-L-isoaspartate alpha-methyl ester + S-adenosyl-L-homocysteine. Functionally, catalyzes the methyl esterification of L-isoaspartyl residues in peptides and proteins that result from spontaneous decomposition of normal L-aspartyl and L-asparaginyl residues. It plays a role in the repair and/or degradation of damaged proteins. This Burkholderia mallei (strain NCTC 10247) protein is Protein-L-isoaspartate O-methyltransferase.